A 360-amino-acid chain; its full sequence is Peptide chain release factor 1 (360 aa).

Position 235 is an N5-methylglutamine (glutamine 235).

This sequence belongs to the prokaryotic/mitochondrial release factor family. Post-translationally, methylated by PrmC. Methylation increases the termination efficiency of RF1.

The protein localises to the cytoplasm. Its function is as follows. Peptide chain release factor 1 directs the termination of translation in response to the peptide chain termination codons UAG and UAA. The chain is Peptide chain release factor 1 from Bordetella parapertussis (strain 12822 / ATCC BAA-587 / NCTC 13253).